A 314-amino-acid polypeptide reads, in one-letter code: Olfactory receptor 1E1 (314 aa).

Residues 1-25 are Extracellular-facing; it reads MMGQNQTSISDFLLLGLPIQPEQQN. N-linked (GlcNAc...) asparagine glycosylation occurs at asparagine 5. The chain crosses the membrane as a helical span at residues 26 to 49; it reads LCYALFLAMYLTTLLGNLLIIVLI. The Cytoplasmic segment spans residues 50-57; the sequence is RLDSHLHT. The helical transmembrane segment at 58–79 threads the bilayer; it reads PMYLFLSNLSFSDLCFSSVTIP. Topologically, residues 80-100 are extracellular; it reads KLLQNMQNQDPSIPYADCLTQ. Residues cysteine 97 and cysteine 189 are joined by a disulfide bond. Residues 101–120 form a helical membrane-spanning segment; it reads MYFFLLFGDLESFLLVAMAY. The Cytoplasmic segment spans residues 121 to 139; the sequence is DRYVAICFPLHYTAIMSPM. Residues 140–158 form a helical membrane-spanning segment; the sequence is LCLSVVALSWVLTTFHAML. Over 159–195 the chain is Extracellular; the sequence is HTLLMARLCFCADNVIPHFFCDMSALLKLACSDTRVN. A helical membrane pass occupies residues 196–219; sequence EWVIFIMGGLILVIPFLLILGSYA. At 220 to 236 the chain is on the cytoplasmic side; the sequence is RIVSSILKVPSSKGICK. Residues 237-259 traverse the membrane as a helical segment; it reads ALSTCGSHLSVVSLFYGTVIGLY. Over 260 to 272 the chain is Extracellular; it reads LCPSANSSTLKDT. The helical transmembrane segment at 273 to 292 threads the bilayer; sequence VMAMIYTVVTPMLNPFIYSL. Residues 293 to 314 are Cytoplasmic-facing; sequence RNRDMKGALSRVIHQKKTFFSL.

Belongs to the G-protein coupled receptor 1 family.

It is found in the cell membrane. Functionally, odorant receptor. The chain is Olfactory receptor 1E1 (OR1E1) from Pan troglodytes (Chimpanzee).